A 450-amino-acid polypeptide reads, in one-letter code: ATP-dependent protease ATPase subunit HslU (450 aa).

ATP-binding positions include isoleucine 18 and 60–65; that span reads GVGKTE. The segment covering 140–151 has biased composition (polar residues); that stretch reads KTSSSGWAQQQE. A disordered region spans residues 140-162; that stretch reads KTSSSGWAQQQEETPENDDQRGT. Residues aspartate 263, glutamate 328, and arginine 400 each contribute to the ATP site.

It belongs to the ClpX chaperone family. HslU subfamily. A double ring-shaped homohexamer of HslV is capped on each side by a ring-shaped HslU homohexamer. The assembly of the HslU/HslV complex is dependent on binding of ATP.

It is found in the cytoplasm. Functionally, ATPase subunit of a proteasome-like degradation complex; this subunit has chaperone activity. The binding of ATP and its subsequent hydrolysis by HslU are essential for unfolding of protein substrates subsequently hydrolyzed by HslV. HslU recognizes the N-terminal part of its protein substrates and unfolds these before they are guided to HslV for hydrolysis. The sequence is that of ATP-dependent protease ATPase subunit HslU from Idiomarina loihiensis (strain ATCC BAA-735 / DSM 15497 / L2-TR).